A 333-amino-acid chain; its full sequence is Phosphate acyltransferase (333 aa).

This sequence belongs to the PlsX family. In terms of assembly, homodimer. Probably interacts with PlsY.

It is found in the cytoplasm. The catalysed reaction is a fatty acyl-[ACP] + phosphate = an acyl phosphate + holo-[ACP]. It functions in the pathway lipid metabolism; phospholipid metabolism. Functionally, catalyzes the reversible formation of acyl-phosphate (acyl-PO(4)) from acyl-[acyl-carrier-protein] (acyl-ACP). This enzyme utilizes acyl-ACP as fatty acyl donor, but not acyl-CoA. This chain is Phosphate acyltransferase, found in Thermosipho melanesiensis (strain DSM 12029 / CIP 104789 / BI429).